A 393-amino-acid chain; its full sequence is Epoxyqueuosine reductase (393 aa).

Catalysis depends on D154, which acts as the Proton donor. The 4Fe-4S ferredoxin-type domain maps to 196–228 (LPLPVDIPVQEGCHSCVACITSCPTGAIVEPYT). Positions 208, 211, 214, 218, 234, 261, 264, and 268 each coordinate [4Fe-4S] cluster.

It belongs to the QueG family. Monomer. Cob(II)alamin serves as cofactor. Requires [4Fe-4S] cluster as cofactor.

It is found in the cytoplasm. It carries out the reaction epoxyqueuosine(34) in tRNA + AH2 = queuosine(34) in tRNA + A + H2O. It participates in tRNA modification; tRNA-queuosine biosynthesis. Catalyzes the conversion of epoxyqueuosine (oQ) to queuosine (Q), which is a hypermodified base found in the wobble positions of tRNA(Asp), tRNA(Asn), tRNA(His) and tRNA(Tyr). This is Epoxyqueuosine reductase from Shewanella oneidensis (strain ATCC 700550 / JCM 31522 / CIP 106686 / LMG 19005 / NCIMB 14063 / MR-1).